The chain runs to 131 residues: Global transcriptional regulator Spx (131 aa).

The short motif at 10 to 13 (CTSC) is the CXXC element. Cysteine 10 and cysteine 13 are oxidised to a cystine.

The protein belongs to the ArsC family. Spx subfamily. In terms of assembly, interacts with the C-terminal domain of the alpha subunit of the RNAP. A single Spx monomer interacts with RNAP to form the transcription activation complex. Interacts with the adapter protein SpxH/YjbH.

The protein resides in the cytoplasm. Under non-stress conditions, Spx is degraded by ClpXP and, to a lesser extent, by ClpCP. Efficient dedradation by ClpXP requires the adapter protein SpxH/YjbH. Binding to SpxH/YjbH reduces the overall conformational flexibility of Spx and stabilizes the C-terminal ClpX recognition region of Spx. In addition, activity is modulated by the formation of a disulfide bound within the N-terminal Cys-X-X-Cys (CXXC) motif, which is required for the transcriptional activation of trxA and trxB, or for the activation of msrAB operon expression following paraquat oxidative stress. However, it seems that formation of the disulfide bound is not essential for induction of all Spx-controlled genes, as for example the case of BSH biosynthesis genes. Similarly, induction of the Spx regulon during cell wall stress is not accompanied by oxidation of the disulfide switch, but requires Spx stabilization by the anti-adapter protein SpxO/YirB. Global transcriptional regulator that plays a key role in stress response and exerts either positive or negative regulation of genes. Acts by interacting with the C-terminal domain of the alpha subunit of the RNA polymerase (RNAP). This interaction can enhance binding of RNAP to the promoter region of target genes and stimulate their transcription, or block interaction of RNAP with activator proteins and repress transcription. Exhibits no DNA-binding activity. Functionally, induces the expression of a large number of genes in response to a variety of stress conditions, such as disulfide, heat and cell wall stress, while concurrently repressing transcription of genes involved in various developmental and growth-related pathways during periods of extreme stress. Functions in the oxidative stress response via induction of the transcription of thioredoxin (trxA) and thioredoxin reductase (trxB) during thiol-specific oxidative (disulfide) stress. Mediates response to oxidative stress caused by paraquat (PQ) via induction of the methionine sulfoxide reductase genes, msrA and msrB. Also acts as a transcriptional activator of the bacillithiol (BSH) biosynthesis genes in response to oxidizing conditions and thio-reactive compounds. Involved in heat stress response and thermotolerance development, which results in diminished cellular protein aggregates. Plays an important adaptive role in the cell wall stress response. Participates in sulfate-dependent control of organosulfur metabolism. Negatively controls, via CymR, the expression of the organosulfur utilization operons ytmI, yxeI and ssu, and directly activates yrrT operon expression during growth in medium containing methionine as sole sulfur source. Negatively affects competence and sporulation. Inhibits biofilm formation in response to disulfide stress by repressing biofilm matrix genes. This chain is Global transcriptional regulator Spx, found in Bacillus subtilis (strain 168).